A 292-amino-acid polypeptide reads, in one-letter code: GTP cyclohydrolase FolE2 (292 aa).

This sequence belongs to the GTP cyclohydrolase IV family.

The catalysed reaction is GTP + H2O = 7,8-dihydroneopterin 3'-triphosphate + formate + H(+). Its pathway is cofactor biosynthesis; 7,8-dihydroneopterin triphosphate biosynthesis; 7,8-dihydroneopterin triphosphate from GTP: step 1/1. Converts GTP to 7,8-dihydroneopterin triphosphate. The chain is GTP cyclohydrolase FolE2 from Staphylococcus epidermidis (strain ATCC 35984 / DSM 28319 / BCRC 17069 / CCUG 31568 / BM 3577 / RP62A).